The primary structure comprises 312 residues: Zinc transporter ZitB (312 aa).

The next 5 membrane-spanning stretches (helical) occupy residues 21–41 (LLFA…GGIL), 48–68 (LADA…LLAV), 90–110 (AAFV…WEAI), 123–143 (LMMV…WILH), and 164–184 (LLGS…GWTP).

It belongs to the cation diffusion facilitator (CDF) transporter (TC 2.A.4) family. SLC30A subfamily.

The protein resides in the cell inner membrane. Involved in zinc efflux across the cytoplasmic membrane, thus reducing zinc accumulation in the cytoplasm and rendering bacteria more resistant to zinc. It may contribute to zinc homeostasis at low concentrations of zinc. This is Zinc transporter ZitB from Salmonella typhimurium (strain LT2 / SGSC1412 / ATCC 700720).